The sequence spans 549 residues: Probable protein kinase UbiB (549 aa).

The Protein kinase domain maps to aspartate 123 to leucine 501. Residues leucine 129–valine 137 and lysine 152 contribute to the ATP site. The active-site Proton acceptor is the aspartate 287. Helical transmembrane passes span serine 498–glutamine 518 and alanine 520–tryptophan 540.

Belongs to the ABC1 family. UbiB subfamily.

The protein resides in the cell inner membrane. The protein operates within cofactor biosynthesis; ubiquinone biosynthesis [regulation]. In terms of biological role, is probably a protein kinase regulator of UbiI activity which is involved in aerobic coenzyme Q (ubiquinone) biosynthesis. This is Probable protein kinase UbiB from Shewanella piezotolerans (strain WP3 / JCM 13877).